The chain runs to 255 residues: Phosphoribosylaminoimidazole-succinocarboxamide synthase A (255 aa).

Belongs to the SAICAR synthetase family.

The enzyme catalyses 5-amino-1-(5-phospho-D-ribosyl)imidazole-4-carboxylate + L-aspartate + ATP = (2S)-2-[5-amino-1-(5-phospho-beta-D-ribosyl)imidazole-4-carboxamido]succinate + ADP + phosphate + 2 H(+). It functions in the pathway purine metabolism; IMP biosynthesis via de novo pathway; 5-amino-1-(5-phospho-D-ribosyl)imidazole-4-carboxamide from 5-amino-1-(5-phospho-D-ribosyl)imidazole-4-carboxylate: step 1/2. The polypeptide is Phosphoribosylaminoimidazole-succinocarboxamide synthase A (purC1) (Bradyrhizobium diazoefficiens (strain JCM 10833 / BCRC 13528 / IAM 13628 / NBRC 14792 / USDA 110)).